We begin with the raw amino-acid sequence, 56 residues long: UPF0434 protein CbuG_1535 (56 aa).

Belongs to the UPF0434 family.

The sequence is that of UPF0434 protein CbuG_1535 from Coxiella burnetii (strain CbuG_Q212) (Coxiella burnetii (strain Q212)).